The primary structure comprises 276 residues: Rhomboid protease GlpG (276 aa).

6 helical membrane-spanning segments follow: residues 94 to 114, 142 to 162, 169 to 189, 192 to 212, 229 to 249, and 250 to 270; these read GPVT…MQIL, ALMH…WYLG, LGSG…GYVQ, FSGP…GYVW, LIIF…GMSM, and ANGA…VDSL. Ser-201 (nucleophile) is an active-site residue. His-254 is an active-site residue.

This sequence belongs to the peptidase S54 family.

The protein resides in the cell inner membrane. It catalyses the reaction Cleaves type-1 transmembrane domains using a catalytic dyad composed of serine and histidine that are contributed by different transmembrane domains.. In terms of biological role, rhomboid-type serine protease that catalyzes intramembrane proteolysis. The sequence is that of Rhomboid protease GlpG from Escherichia fergusonii (strain ATCC 35469 / DSM 13698 / CCUG 18766 / IAM 14443 / JCM 21226 / LMG 7866 / NBRC 102419 / NCTC 12128 / CDC 0568-73).